Consider the following 115-residue polypeptide: Large ribosomal subunit protein mL60 (115 aa).

The transit peptide at 1 to 23 directs the protein to the mitochondrion; that stretch reads MLGAFNSTLARFGGLVHKVPWRL. The tract at residues 88–115 is disordered; sequence AGLQGFRKGVHKSPKWTRSTNRVNPTGF. Over residues 103–115 the composition is skewed to polar residues; that stretch reads WTRSTNRVNPTGF.

It belongs to the mitochondrion-specific ribosomal protein mL60 family. Component of the mitochondrial large ribosomal subunit (mt-LSU). Mature yeast 74S mitochondrial ribosomes consist of a small (37S) and a large (54S) subunit. The 37S small subunit contains a 15S ribosomal RNA (15S mt-rRNA) and at least 32 different proteins. The 54S large subunit contains a 21S rRNA (21S mt-rRNA) and at least 45 different proteins.

It localises to the mitochondrion. Functionally, component of the mitochondrial ribosome (mitoribosome), a dedicated translation machinery responsible for the synthesis of mitochondrial genome-encoded proteins, including at least some of the essential transmembrane subunits of the mitochondrial respiratory chain. The mitoribosomes are attached to the mitochondrial inner membrane and translation products are cotranslationally integrated into the membrane. This is Large ribosomal subunit protein mL60 (mrpl31) from Schizosaccharomyces pombe (strain 972 / ATCC 24843) (Fission yeast).